The chain runs to 230 residues: uncharacterized protein (230 aa).

The signal sequence occupies residues 1-18 (MRQYTSKSILFMTAIALS).

This is an uncharacterized protein from Pasteurella multocida (strain Pm70).